Reading from the N-terminus, the 519-residue chain is uncharacterized protein (519 aa).

13 consecutive transmembrane segments (helical) span residues 19–39 (FSSS…AIAT), 42–62 (VLVS…DWQI), 87–107 (MNIV…TVSG), 128–148 (LLAA…SLAV), 179–199 (VMMP…GLLA), 220–240 (FYAI…FDIA), 270–290 (LILP…YTGA), 311–331 (VGTS…LLII), 345–365 (WIVG…AWTI), 386–406 (IPMQ…AFST), 413–433 (FGIM…ELLL), 475–495 (LPYA…VGFT), and 496–516 (YSGL…IFAV).

It localises to the cell membrane. This is an uncharacterized protein from Haemophilus influenzae (strain ATCC 51907 / DSM 11121 / KW20 / Rd).